Reading from the N-terminus, the 342-residue chain is N-acetyl-gamma-glutamyl-phosphate reductase (342 aa).

Cysteine 146 is an active-site residue.

The protein belongs to the NAGSA dehydrogenase family. Type 1 subfamily.

The protein resides in the cytoplasm. The enzyme catalyses N-acetyl-L-glutamate 5-semialdehyde + phosphate + NADP(+) = N-acetyl-L-glutamyl 5-phosphate + NADPH + H(+). The protein operates within amino-acid biosynthesis; L-arginine biosynthesis; N(2)-acetyl-L-ornithine from L-glutamate: step 3/4. In terms of biological role, catalyzes the NADPH-dependent reduction of N-acetyl-5-glutamyl phosphate to yield N-acetyl-L-glutamate 5-semialdehyde. The protein is N-acetyl-gamma-glutamyl-phosphate reductase of Saccharopolyspora erythraea (strain ATCC 11635 / DSM 40517 / JCM 4748 / NBRC 13426 / NCIMB 8594 / NRRL 2338).